The following is a 278-amino-acid chain: Dermonecrotic toxin LspiSicTox-betaIE2i (278 aa).

His5 is a catalytic residue. Mg(2+) contacts are provided by Glu25 and Asp27. Residue His41 is the Nucleophile of the active site. 2 cysteine pairs are disulfide-bonded: Cys45-Cys51 and Cys47-Cys190. Glu85 contacts Mg(2+).

It belongs to the arthropod phospholipase D family. Class II subfamily. It depends on Mg(2+) as a cofactor. Expressed by the venom gland.

The protein localises to the secreted. It catalyses the reaction an N-(acyl)-sphingosylphosphocholine = an N-(acyl)-sphingosyl-1,3-cyclic phosphate + choline. It carries out the reaction an N-(acyl)-sphingosylphosphoethanolamine = an N-(acyl)-sphingosyl-1,3-cyclic phosphate + ethanolamine. The enzyme catalyses a 1-acyl-sn-glycero-3-phosphocholine = a 1-acyl-sn-glycero-2,3-cyclic phosphate + choline. The catalysed reaction is a 1-acyl-sn-glycero-3-phosphoethanolamine = a 1-acyl-sn-glycero-2,3-cyclic phosphate + ethanolamine. Functionally, dermonecrotic toxins cleave the phosphodiester linkage between the phosphate and headgroup of certain phospholipids (sphingolipid and lysolipid substrates), forming an alcohol (often choline) and a cyclic phosphate. This toxin acts on sphingomyelin (SM). It may also act on ceramide phosphoethanolamine (CPE), lysophosphatidylcholine (LPC) and lysophosphatidylethanolamine (LPE), but not on lysophosphatidylserine (LPS), and lysophosphatidylglycerol (LPG). It acts by transphosphatidylation, releasing exclusively cyclic phosphate products as second products. Induces dermonecrosis, hemolysis, increased vascular permeability, edema, inflammatory response, and platelet aggregation. This Loxosceles spinulosa (Recluse spider) protein is Dermonecrotic toxin LspiSicTox-betaIE2i.